A 237-amino-acid chain; its full sequence is Demethylmenaquinone methyltransferase (237 aa).

S-adenosyl-L-methionine-binding positions include T58, D79, and N106–A107.

This sequence belongs to the class I-like SAM-binding methyltransferase superfamily. MenG/UbiE family.

It carries out the reaction a 2-demethylmenaquinol + S-adenosyl-L-methionine = a menaquinol + S-adenosyl-L-homocysteine + H(+). Its pathway is quinol/quinone metabolism; menaquinone biosynthesis; menaquinol from 1,4-dihydroxy-2-naphthoate: step 2/2. Methyltransferase required for the conversion of demethylmenaquinol (DMKH2) to menaquinol (MKH2). The sequence is that of Demethylmenaquinone methyltransferase from Bacillus anthracis (strain A0248).